Reading from the N-terminus, the 3678-residue chain is Dystrophin (3678 aa).

An actin-binding region spans residues 1–240 (MLWWEEVEDC…YITSLFQVLP (240 aa)). 2 Calponin-homology (CH) domains span residues 15-119 (DVQK…LHWQ) and 134-240 (TNSE…QVLP). The interval 63-72 (PKEKGSTRVH) is ANK2- and ANK-3 binding. The disordered stretch occupies residues 313 to 333 (DSTQSPYPSQHLEAPRDKSLD). Spectrin repeat units follow at residues 341-449 (VNLD…KLHK), 450-558 (VLMD…VLQD), 561-669 (LKWQ…QISQ), 721-830 (ELRK…WLEY), 832-936 (TNII…ELQT), 945-1047 (RYQE…KLEE), 1050-1156 (NKLR…ALKA), 1159-1265 (DKTV…TLEE), 1268-1369 (ACWH…LLEQ), 1370-1465 (SIQS…LFQK), 1470-1570 (EQRL…QLEK), 1573-1678 (KLSR…LLLE), 1681-1780 (KHME…KASI), 1781-1876 (PLKE…KALE), 1879-1981 (HQWY…TLHE), 1994-2103 (DVSY…RFDR), 2106-2210 (EKWR…RIEE), 2213-2318 (NVLS…ELEV), 2319-2416 (HLKD…LRTK), 2468-2570 (FNRA…QLNE), 2573-2679 (KDST…ALEE), 2682-2795 (RLLQ…HLEA), 2801-2923 (KRLH…RKID), and 2928-3033 (RLQE…QLHE). The tract at residues 1417–1915 (SDLTSHEISL…PEPRDERKLK (499 aa)) is interaction with SYNM. The WW domain occupies 3048–3081 (TSVQGPWERAISPNKVPYYINHETQTTCWDHPKM). Residues 3051–3401 (QGPWERAISP…TVLEGDNMET (351 aa)) are interaction with SYNM. Residues 3301 to 3357 (KHQAKCNICKECPIIGFRYRSLKHFNYDICQSCFFSGRVAKGHKMHYPMVEYCTPTT) form a ZZ-type; degenerate zinc finger. Zn(2+) contacts are provided by Cys-3306, Cys-3309, Cys-3330, and Cys-3333. The interval 3459-3511 (DDEHLLIQHYCQSLNQDSPLSQPRSPAQILISLESEERGELERILADLEEENR) is binds to SNTB1. Ser-3476, Ser-3483, and Ser-3493 each carry phosphoserine. Disordered stretches follow at residues 3521-3547 (KQQHEHKGLSPLPSPPEMMPTSPQSPR) and 3596-3678 (EAKV…EDTM). 2 stretches are compositionally biased toward polar residues: residues 3600–3619 (NGTTVSSPSTSLQRSDSSQP) and 3655–3665 (QLNNSFPSSRG). Phosphoserine occurs at positions 3605, 3606, 3610, 3616, 3617, and 3659.

Interacts with SYNM. Interacts with the syntrophins SNTG1 and SNTG2. Interacts with KRT19. Component of the dystrophin-associated glycoprotein complex which is composed of three subcomplexes: a cytoplasmic complex comprised of DMD (or UTRN), DTNA and a number of syntrophins, such as SNTB1, SNTB2, SNTG1 and SNTG2, the transmembrane dystroglycan complex, and the sarcoglycan-sarcospan complex. Interacts with DAG1 (betaDAG1) with DMD; the interaction is inhibited by phosphorylation on the PPXY motif of DAG1. Interacts with SYNM; SNTA1 and SNTB1. Interacts with CMYA5. Directly interacts with ANK2 and ANK3; these interactions do not interfere with betaDAG1-binding and are necessary for proper localization in muscle cells. Identified in a dystroglycan complex that contains at least PRX, DRP2, UTRN, DMD and DAG1. Interacts with DTNB. Interacts with PGM5; the interaction is direct. Interacts with NOS1; localizes NOS1 to sarcolemma in muscle cells. As to expression, detected in quadriceps muscle and in sciatic nerve (at protein level). Expressed in the sarcolemma of the soleus muscle (at protein level). Differentially expressed during skeletal muscle, heart, and brain development. Also expressed in retina.

Its subcellular location is the cell membrane. It is found in the sarcolemma. The protein resides in the cytoplasm. It localises to the cytoskeleton. The protein localises to the postsynaptic cell membrane. Its function is as follows. Anchors the extracellular matrix to the cytoskeleton via F-actin. Ligand for dystroglycan. Component of the dystrophin-associated glycoprotein complex which accumulates at the neuromuscular junction (NMJ) and at a variety of synapses in the peripheral and central nervous systems and has a structural function in stabilizing the sarcolemma. Also implicated in signaling events and synaptic transmission. The chain is Dystrophin (Dmd) from Mus musculus (Mouse).